The chain runs to 427 residues: Glutamate-1-semialdehyde 2,1-aminomutase (427 aa).

Lys265 is modified (N6-(pyridoxal phosphate)lysine).

Belongs to the class-III pyridoxal-phosphate-dependent aminotransferase family. HemL subfamily. Homodimer. Pyridoxal 5'-phosphate is required as a cofactor.

The protein resides in the cytoplasm. The enzyme catalyses (S)-4-amino-5-oxopentanoate = 5-aminolevulinate. The protein operates within porphyrin-containing compound metabolism; protoporphyrin-IX biosynthesis; 5-aminolevulinate from L-glutamyl-tRNA(Glu): step 2/2. This Photorhabdus laumondii subsp. laumondii (strain DSM 15139 / CIP 105565 / TT01) (Photorhabdus luminescens subsp. laumondii) protein is Glutamate-1-semialdehyde 2,1-aminomutase.